The primary structure comprises 180 residues: ATP synthase subunit delta (180 aa).

The protein belongs to the ATPase delta chain family. In terms of assembly, F-type ATPases have 2 components, F(1) - the catalytic core - and F(0) - the membrane proton channel. F(1) has five subunits: alpha(3), beta(3), gamma(1), delta(1), epsilon(1). F(0) has three main subunits: a(1), b(2) and c(10-14). The alpha and beta chains form an alternating ring which encloses part of the gamma chain. F(1) is attached to F(0) by a central stalk formed by the gamma and epsilon chains, while a peripheral stalk is formed by the delta and b chains.

The protein localises to the cell membrane. Functionally, f(1)F(0) ATP synthase produces ATP from ADP in the presence of a proton or sodium gradient. F-type ATPases consist of two structural domains, F(1) containing the extramembraneous catalytic core and F(0) containing the membrane proton channel, linked together by a central stalk and a peripheral stalk. During catalysis, ATP synthesis in the catalytic domain of F(1) is coupled via a rotary mechanism of the central stalk subunits to proton translocation. Its function is as follows. This protein is part of the stalk that links CF(0) to CF(1). It either transmits conformational changes from CF(0) to CF(1) or is implicated in proton conduction. This is ATP synthase subunit delta from Bacillus cereus (strain 03BB102).